Here is a 251-residue protein sequence, read N- to C-terminus: Triosephosphate isomerase (251 aa).

9–11 lines the substrate pocket; the sequence is NWK. His95 (electrophile) is an active-site residue. Glu167 functions as the Proton acceptor in the catalytic mechanism. Residues Gly173, Ser213, and 234–235 contribute to the substrate site; that span reads GG.

It belongs to the triosephosphate isomerase family. In terms of assembly, homodimer.

It is found in the cytoplasm. The enzyme catalyses D-glyceraldehyde 3-phosphate = dihydroxyacetone phosphate. Its pathway is carbohydrate biosynthesis; gluconeogenesis. It functions in the pathway carbohydrate degradation; glycolysis; D-glyceraldehyde 3-phosphate from glycerone phosphate: step 1/1. In terms of biological role, involved in the gluconeogenesis. Catalyzes stereospecifically the conversion of dihydroxyacetone phosphate (DHAP) to D-glyceraldehyde-3-phosphate (G3P). The sequence is that of Triosephosphate isomerase from Carboxydothermus hydrogenoformans (strain ATCC BAA-161 / DSM 6008 / Z-2901).